Reading from the N-terminus, the 393-residue chain is Lysophosphatidic acid receptor 1 (393 aa).

Residues 1–50 (MAAASTSSPVVSQPQFTAMNEPQCFYNESIAFFYNRSGKYLATEWNTVSK) lie on the Extracellular side of the membrane. Cystine bridges form between Cys24-Cys190 and Cys188-Cys195. 2 N-linked (GlcNAc...) asparagine glycosylation sites follow: Asn27 and Asn35. Lys39 is an a 1-acyl-sn-glycero-3-phosphate binding site. The helical transmembrane segment at 51-75 (LVMGLGITVCIFIMLANLLVMVAIY) threads the bilayer. Residues 76 to 83 (VNRRFHFP) lie on the Cytoplasmic side of the membrane. The helical transmembrane segment at 84 to 107 (IYYLMANLAAADFFAGLAYFYLMF) threads the bilayer. Over 108 to 121 (NTGPNTRRLTVSTW) the chain is Extracellular. The helical transmembrane segment at 122-144 (LLRQGLIDTTVTASVANLLAIAI) threads the bilayer. 124–129 (RQGLID) contacts a 1-acyl-sn-glycero-3-phosphate. Residues 145-163 (ERHITVFRMQLHTRMSNRR) are Cytoplasmic-facing. The helical transmembrane segment at 164–184 (VVVVIVVIWTMAIVMGAIPSV) threads the bilayer. The Extracellular portion of the chain corresponds to 185–204 (GWNCICDIENCSNMAPLYSD). The chain crosses the membrane as a helical span at residues 205-225 (SYLVFWAIFNLVTFVVMVVLY). Trp210 is an a 1-acyl-sn-glycero-3-phosphate binding site. Over 226 to 255 (AHIFGYVRQRTMRMSRHSSGPRRNRDTMMS) the chain is Cytoplasmic. A helical transmembrane segment spans residues 256 to 280 (LLKTVVIVLGAFIICWTPGLVLLLL). Topologically, residues 281-294 (DVCCPQCDVLAYEK) are extracellular. Cys284 and Cys287 are oxidised to a cystine. The chain crosses the membrane as a helical span at residues 295–315 (FFLLLAEFNSAMNPIIYSYRD). Residues 316–393 (KEMSATFRQI…PPERPGQGRV (78 aa)) lie on the Cytoplasmic side of the membrane. A Phosphoserine modification is found at Ser341. Thr351 carries the phosphothreonine modification. Residues 369–381 (KMRGGHHLLRDEQ) are compositionally biased toward basic and acidic residues. The tract at residues 369 to 393 (KMRGGHHLLRDEQPPPPERPGQGRV) is disordered.

Belongs to the G-protein coupled receptor 1 family. As to quaternary structure, interacts with RALA and GRK2. Interacts with GNAQ and GNA13. Interacts with CD14; the interaction is enhanced by exposure to bacterial lipopolysaccharide (LPS). N-glycosylated. In terms of tissue distribution, detected in brain cortex and in pituitary pars tuberalis.

It is found in the cell surface. The protein localises to the cell membrane. Its subcellular location is the endosome. In terms of biological role, receptor for lysophosphatidic acid (LPA). Plays a role in the reorganization of the actin cytoskeleton, cell migration, differentiation and proliferation, and thereby contributes to the responses to tissue damage and infectious agents. Activates downstream signaling cascades via the G(i)/G(o), G(12)/G(13), and G(q) families of heteromeric G proteins. Signaling inhibits adenylyl cyclase activity and decreases cellular cAMP levels. Signaling triggers an increase of cytoplasmic Ca(2+) levels. Activates RALA; this leads to the activation of phospholipase C (PLC) and the formation of inositol 1,4,5-trisphosphate. Signaling mediates activation of down-stream MAP kinases. Contributes to the regulation of cell shape. Promotes Rho-dependent reorganization of the actin cytoskeleton in neuronal cells and neurite retraction. Promotes the activation of Rho and the formation of actin stress fibers. Promotes formation of lamellipodia at the leading edge of migrating cells via activation of RAC1. Through its function as LPA receptor, plays a role in chemotaxis and cell migration, including responses to injury and wounding. Plays a role in triggering inflammation in response to bacterial lipopolysaccharide (LPS) via its interaction with CD14. Promotes cell proliferation in response to LPA. Inhibits the intracellular ciliogenesis pathway in response to LPA and through AKT1 activation. Required for normal skeleton development. May play a role in osteoblast differentiation. Required for normal brain development. Required for normal proliferation, survival and maturation of newly formed neurons in the adult dentate gyrus. Plays a role in pain perception and in the initiation of neuropathic pain. The polypeptide is Lysophosphatidic acid receptor 1 (LPAR1) (Ovis aries (Sheep)).